We begin with the raw amino-acid sequence, 399 residues long: Probable F-box protein At4g22060 (399 aa).

Positions 12-48 (SWSKLPLDLLIMVFERLGFVDFQRTKSVCLAWLYASR) constitute an F-box domain.

This Arabidopsis thaliana (Mouse-ear cress) protein is Probable F-box protein At4g22060.